We begin with the raw amino-acid sequence, 88 residues long: Putative membrane protein insertion efficiency factor (88 aa).

The interval 66–88 (DFVPPKKDKNADSEHSCKAHHHH) is disordered. Residues 69-82 (PPKKDKNADSEHSC) are compositionally biased toward basic and acidic residues.

This sequence belongs to the UPF0161 family.

The protein resides in the cell membrane. Functionally, could be involved in insertion of integral membrane proteins into the membrane. This Listeria monocytogenes serotype 4a (strain HCC23) protein is Putative membrane protein insertion efficiency factor.